The primary structure comprises 411 residues: Mannan endo-1,4-beta-mannosidase 1 (411 aa).

The first 17 residues, 1–17 (MLNILPFFLFFLPFLIG), serve as a signal peptide directing secretion. Residue Asn33 is glycosylated (N-linked (GlcNAc...) asparagine). Trp87 and Asn197 together coordinate substrate. The active-site Proton donor is Glu198. A glycan (N-linked (GlcNAc...) asparagine) is linked at Asn202. Residue Tyr277 coordinates substrate. The Nucleophile role is filled by Glu319. Trp361 provides a ligand contact to substrate. 2 N-linked (GlcNAc...) asparagine glycosylation sites follow: Asn366 and Asn384.

Belongs to the glycosyl hydrolase 5 (cellulase A) family. In terms of tissue distribution, expressed in roots, stems and flowers.

The protein resides in the secreted. The enzyme catalyses Random hydrolysis of (1-&gt;4)-beta-D-mannosidic linkages in mannans, galactomannans and glucomannans.. In Arabidopsis thaliana (Mouse-ear cress), this protein is Mannan endo-1,4-beta-mannosidase 1 (MAN1).